Reading from the N-terminus, the 311-residue chain is Pyrimidine-specific ribonucleoside hydrolase RihA (311 aa).

Residue His240 is part of the active site.

It belongs to the IUNH family. RihA subfamily.

Hydrolyzes cytidine or uridine to ribose and cytosine or uracil, respectively. The chain is Pyrimidine-specific ribonucleoside hydrolase RihA from Klebsiella pneumoniae subsp. pneumoniae (strain ATCC 700721 / MGH 78578).